Here is a 446-residue protein sequence, read N- to C-terminus: Forkhead box protein F2 (446 aa).

The segment covering 1–18 (MSTEGGPPPPPPRPPPAP) has biased composition (pro residues). Residues 1–97 (MSTEGGPPPP…TKKATSGLRR (97 aa)) form a disordered region. Low complexity predominate over residues 45–78 (STSSSSSSSSASCASSSSNSVSASAGACKSAASS). Residues 100-194 (KPPYSYIALI…EEGSFRRRPR (95 aa)) constitute a DNA-binding region (fork-head). Disordered stretches follow at residues 257–278 (AGAP…HMSP), 304–325 (GGGG…SPAM), and 340–371 (AHWS…GLHP). Residues 263 to 274 (AHPHHLHHHHVP) show a composition bias toward basic residues. Residues 311 to 325 (GPDSSSSPVPSSPAM) show a composition bias toward low complexity.

In terms of assembly, interacts with the transcription factors TBP and TFIIB. In terms of tissue distribution, uniquely expressed in the bronchiolar epithelium and in type II pneumocytes.

The protein localises to the nucleus. Probable transcription activator for a number of lung-specific genes. Mediates up-regulation of the E3 ligase IRF2BPL and drives ubiquitination and degradation of CTNNB1. The sequence is that of Forkhead box protein F2 (Foxf2) from Mus musculus (Mouse).